The primary structure comprises 843 residues: Urease (843 aa).

The 444-residue stretch at G400–F843 folds into the Urease domain. Positions 405, 407, and 488 each coordinate Ni(2+). An N6-carboxylysine modification is found at K488. H490 provides a ligand contact to substrate. Positions 517 and 543 each coordinate Ni(2+). Catalysis depends on H591, which acts as the Proton donor. A Ni(2+)-binding site is contributed by D631.

The protein in the C-terminal section; belongs to the metallo-dependent hydrolases superfamily. Urease alpha subunit family. Homohexamer. Other oligomeric forms may exist depending on pH and presence of salts. It depends on Ni(2+) as a cofactor. In terms of processing, carboxylation allows a single lysine to coordinate two nickel ions.

The catalysed reaction is urea + 2 H2O + H(+) = hydrogencarbonate + 2 NH4(+). The protein operates within nitrogen metabolism; urea degradation; CO(2) and NH(3) from urea (urease route): step 1/1. Functionally, urea hydrolase involved in nitrogen recycling from ureide, purine, and arginine catabolism. The polypeptide is Urease (Oryza sativa subsp. indica (Rice)).